The primary structure comprises 363 residues: S-adenosylmethionine:tRNA ribosyltransferase-isomerase (363 aa).

Belongs to the QueA family. As to quaternary structure, monomer.

The protein localises to the cytoplasm. The enzyme catalyses 7-aminomethyl-7-carbaguanosine(34) in tRNA + S-adenosyl-L-methionine = epoxyqueuosine(34) in tRNA + adenine + L-methionine + 2 H(+). It participates in tRNA modification; tRNA-queuosine biosynthesis. Transfers and isomerizes the ribose moiety from AdoMet to the 7-aminomethyl group of 7-deazaguanine (preQ1-tRNA) to give epoxyqueuosine (oQ-tRNA). This Mannheimia succiniciproducens (strain KCTC 0769BP / MBEL55E) protein is S-adenosylmethionine:tRNA ribosyltransferase-isomerase.